A 183-amino-acid chain; its full sequence is Capsid protein (183 aa).

Residues 136 to 183 form a disordered region; it reads NAPILSTLPETTVVRRRGRSPRRRTPSPRRRRSQSPRRRRSQSRESQC. The span at 149-176 shows a compositional bias: basic residues; sequence VRRRGRSPRRRTPSPRRRRSQSPRRRRS. 3 positions are modified to phosphoserine; by host: Ser-155, Ser-162, and Ser-170. One copy of the 1; half-length repeat lies at 155–161; it reads SPRRRTP. The segment at 155–177 is 3 X 8 AA repeats of S-P-R-R-R-[PR]-S-Q; that stretch reads SPRRRTPSPRRRRSQSPRRRRSQ. The short motif at 158–175 is the Bipartite nuclear localization signal element; sequence RRTPSPRRRRSQSPRRRR. Repeat copies occupy residues 162 to 169 and 170 to 177. Residues 177-183 are RNA binding; it reads QSRESQC.

Belongs to the orthohepadnavirus core antigen family. Homodimerizes, then multimerizes. Interacts with cytosol exposed regions of viral L glycoprotein present in the reticulum-to-Golgi compartment. Interacts with human FLNB. Phosphorylated form interacts with host importin alpha; this interaction depends on the exposure of the NLS, which itself depends upon genome maturation and/or phosphorylation of the capsid protein. Interacts with host NUP153. Post-translationally, phosphorylated by host SRPK1, SRPK2, and maybe protein kinase C or GAPDH. Phosphorylation is critical for pregenomic RNA packaging. Protein kinase C phosphorylation is stimulated by HBx protein and may play a role in transport of the viral genome to the nucleus at the late step during the viral replication cycle.

The protein resides in the virion. It localises to the host cytoplasm. In terms of biological role, self assembles to form an icosahedral capsid. Most capsids appear to be large particles with an icosahedral symmetry of T=4 and consist of 240 copies of capsid protein, though a fraction forms smaller T=3 particles consisting of 180 capsid proteins. Entering capsids are transported along microtubules to the nucleus. Phosphorylation of the capsid is thought to induce exposure of nuclear localization signal in the C-terminal portion of the capsid protein that allows binding to the nuclear pore complex via the importin (karyopherin-) alpha and beta. Capsids are imported in intact form through the nuclear pore into the nuclear basket, where it probably binds NUP153. Only capsids that contain the mature viral genome can release the viral DNA and capsid protein into the nucleoplasm. Immature capsids get stuck in the basket. Capsids encapsulate the pre-genomic RNA and the P protein. Pre-genomic RNA is reverse-transcribed into DNA while the capsid is still in the cytoplasm. The capsid can then either be directed to the nucleus, providing more genomes for transcription, or bud through the endoplasmic reticulum to provide new virions. This Homo sapiens (Human) protein is Capsid protein.